Here is a 70-residue protein sequence, read N- to C-terminus: MTALAAGIAMLAGLGVGIGIGIATAKAAESVGRQPEAYGRILPLFFIGAALAEAVAIYSFVIAILLVLKV.

2 consecutive transmembrane segments (helical) span residues 3–23 (ALAAGIAMLAGLGVGIGIGIA) and 44–64 (LFFIGAALAEAVAIYSFVIAI).

The protein belongs to the ATPase C chain family. As to quaternary structure, F-type ATPases have 2 components, F(1) - the catalytic core - and F(0) - the membrane proton channel. F(1) has five subunits: alpha(3), beta(3), gamma(1), delta(1), epsilon(1). F(0) has three main subunits: a(1), b(2) and c(10-14). The alpha and beta chains form an alternating ring which encloses part of the gamma chain. F(1) is attached to F(0) by a central stalk formed by the gamma and epsilon chains, while a peripheral stalk is formed by the delta and b chains.

It localises to the cell membrane. Functionally, f(1)F(0) ATP synthase produces ATP from ADP in the presence of a proton or sodium gradient. F-type ATPases consist of two structural domains, F(1) containing the extramembraneous catalytic core and F(0) containing the membrane proton channel, linked together by a central stalk and a peripheral stalk. During catalysis, ATP synthesis in the catalytic domain of F(1) is coupled via a rotary mechanism of the central stalk subunits to proton translocation. Key component of the F(0) channel; it plays a direct role in translocation across the membrane. A homomeric c-ring of between 10-14 subunits forms the central stalk rotor element with the F(1) delta and epsilon subunits. In Caldicellulosiruptor saccharolyticus (strain ATCC 43494 / DSM 8903 / Tp8T 6331), this protein is ATP synthase subunit c.